The sequence spans 100 residues: Small ribosomal subunit protein uS14 (100 aa).

It belongs to the universal ribosomal protein uS14 family. Part of the 30S ribosomal subunit. Contacts proteins S3 and S10.

In terms of biological role, binds 16S rRNA, required for the assembly of 30S particles and may also be responsible for determining the conformation of the 16S rRNA at the A site. In Prochlorococcus marinus (strain MIT 9301), this protein is Small ribosomal subunit protein uS14.